The chain runs to 473 residues: Bifunctional protein HldE (473 aa).

The segment at 1–318 (MKLSMPRFDQ…RAIQREEGSE (318 aa)) is ribokinase. 194–197 (NLSE) provides a ligand contact to ATP. Asp263 is a catalytic residue. Positions 343–473 (FTNGCFDILH…TAIVEKIRKN (131 aa)) are cytidylyltransferase.

In the N-terminal section; belongs to the carbohydrate kinase PfkB family. It in the C-terminal section; belongs to the cytidylyltransferase family. In terms of assembly, homodimer.

It carries out the reaction D-glycero-beta-D-manno-heptose 7-phosphate + ATP = D-glycero-beta-D-manno-heptose 1,7-bisphosphate + ADP + H(+). It catalyses the reaction D-glycero-beta-D-manno-heptose 1-phosphate + ATP + H(+) = ADP-D-glycero-beta-D-manno-heptose + diphosphate. It participates in nucleotide-sugar biosynthesis; ADP-L-glycero-beta-D-manno-heptose biosynthesis; ADP-L-glycero-beta-D-manno-heptose from D-glycero-beta-D-manno-heptose 7-phosphate: step 1/4. Its pathway is nucleotide-sugar biosynthesis; ADP-L-glycero-beta-D-manno-heptose biosynthesis; ADP-L-glycero-beta-D-manno-heptose from D-glycero-beta-D-manno-heptose 7-phosphate: step 3/4. In terms of biological role, catalyzes the phosphorylation of D-glycero-D-manno-heptose 7-phosphate at the C-1 position to selectively form D-glycero-beta-D-manno-heptose-1,7-bisphosphate. Functionally, catalyzes the ADP transfer from ATP to D-glycero-beta-D-manno-heptose 1-phosphate, yielding ADP-D-glycero-beta-D-manno-heptose. The chain is Bifunctional protein HldE from Pseudomonas putida (strain GB-1).